Reading from the N-terminus, the 717-residue chain is MGLLSEGSPLSWEETKALADHVREHGVNQFINLYHRLKDRQGDILKWGDEVEYIIVKFDDEQKVARVALRAQDLLAQLNEKELADPNGVKSLWRPEYGAYMIEGTPGKPFGGLMAHFNLVEANMRYRREEVTELLAKDECVMSITNFPRLGAPNFTYPLAQPRPEDPLSSARSLYFPDEAIFPGHPRFKTLTRNIRKRRGEKVSIKLKVFKDTKTKLPVEGAPPGEPDVVLLDAMGFGMGCCCLQLTFQACNITEARRLYDQLAPLCPIMLALTAASPIYRGYLTESDCRWNVISSSVDCRTEEERGLAPLDQQKFRIAKSRYDSIDSYLSPEGAKYNDVPLTYDEKVYQRLVEGGIDHLLAQHVAHLFIRDTVSLFSEKVHQNDNEDTDHFENIQSTNWQTMRFKPPPPNSSIGWRVEFRPCEAQISDFENAAIVCFVVLLTRVILSYQLNFLTPISKVDENMQTAQKRDACRKEKFWFRKSSKTTEQRAAKAQAQAQAQAKAQAQTNGKATLNGNGLANGNGNGSENSDQEEQQPLTNGSAKMNGHGSGTTNGTNGSSNGSSNGTDSDHTDTDDEENELFQLLSINEIFNGKPNVFPGLVPLIRSYLQSMEVDTDTHCTIEQYLRFIQKRAAGELITTATWMREQVLSHPDYKQDSVVSERINYDLLKRIQGIQEGKQVEPALLGQDYHSKTKTKDFIPPALQKQLAKNGCCEEK.

Residues 484–576 form a disordered region; the sequence is SKTTEQRAAK…TDSDHTDTDD (93 aa). 2 stretches are compositionally biased toward low complexity: residues 492–518 and 551–567; these read AKAQ…NGNG and GTTN…SNGT.

This sequence belongs to the glutamate--cysteine ligase type 3 family.

It catalyses the reaction L-cysteine + L-glutamate + ATP = gamma-L-glutamyl-L-cysteine + ADP + phosphate + H(+). The catalysed reaction is (2S)-2-aminobutanoate + L-glutamate + ATP = gamma-L-glutamyl-(2S)-2-aminobutanoate + ADP + phosphate + H(+). It participates in sulfur metabolism; glutathione biosynthesis; glutathione from L-cysteine and L-glutamate: step 1/2. Its function is as follows. Catalyzes the ATP-dependent ligation of L-glutamate and L-cysteine and participates in the first and rate-limiting step in glutathione biosynthesis. This chain is Glutamate--cysteine ligase, found in Drosophila melanogaster (Fruit fly).